We begin with the raw amino-acid sequence, 76 residues long: UPF0248 protein PAE2518 (76 aa).

It belongs to the UPF0248 family.

This is UPF0248 protein PAE2518 from Pyrobaculum aerophilum (strain ATCC 51768 / DSM 7523 / JCM 9630 / CIP 104966 / NBRC 100827 / IM2).